The primary structure comprises 346 residues: tRNA/tmRNA (uracil-C(5))-methyltransferase (346 aa).

Positions 168, 197, 202, 218, and 278 each coordinate S-adenosyl-L-methionine. C303 (nucleophile) is an active-site residue. The active-site Proton acceptor is E337.

The protein belongs to the class I-like SAM-binding methyltransferase superfamily. RNA M5U methyltransferase family. TrmA subfamily.

It catalyses the reaction uridine(54) in tRNA + S-adenosyl-L-methionine = 5-methyluridine(54) in tRNA + S-adenosyl-L-homocysteine + H(+). It carries out the reaction uridine(341) in tmRNA + S-adenosyl-L-methionine = 5-methyluridine(341) in tmRNA + S-adenosyl-L-homocysteine + H(+). In terms of biological role, dual-specificity methyltransferase that catalyzes the formation of 5-methyluridine at position 54 (m5U54) in all tRNAs, and that of position 341 (m5U341) in tmRNA (transfer-mRNA). This chain is tRNA/tmRNA (uracil-C(5))-methyltransferase, found in Campylobacter lari (strain RM2100 / D67 / ATCC BAA-1060).